The following is a 330-amino-acid chain: Aspartate--ammonia ligase (330 aa).

Belongs to the class-II aminoacyl-tRNA synthetase family. AsnA subfamily.

It is found in the cytoplasm. It catalyses the reaction L-aspartate + NH4(+) + ATP = L-asparagine + AMP + diphosphate + H(+). It functions in the pathway amino-acid biosynthesis; L-asparagine biosynthesis; L-asparagine from L-aspartate (ammonia route): step 1/1. The polypeptide is Aspartate--ammonia ligase (Escherichia coli O127:H6 (strain E2348/69 / EPEC)).